Here is a 58-residue protein sequence, read N- to C-terminus: Potassium channel toxin alpha-KTx 26.2 (58 aa).

An N-terminal signal peptide occupies residues 1 to 19 (MKTIFVVILVLFVLSAMLA). Cystine bridges form between C31/C49, C35/C54, and C39/C56.

The protein belongs to the short scorpion toxin superfamily. Potassium channel inhibitor family. Alpha-KTx 26 subfamily. In terms of tissue distribution, expressed by the venom gland.

It localises to the secreted. Functionally, inhibits voltage-gated potassium channels. The sequence is that of Potassium channel toxin alpha-KTx 26.2 from Lychas mucronatus (Chinese swimming scorpion).